The following is a 92-amino-acid chain: Small ribosomal subunit protein uS19 (92 aa).

The protein belongs to the universal ribosomal protein uS19 family.

Its function is as follows. Protein S19 forms a complex with S13 that binds strongly to the 16S ribosomal RNA. The protein is Small ribosomal subunit protein uS19 of Desulfosudis oleivorans (strain DSM 6200 / JCM 39069 / Hxd3) (Desulfococcus oleovorans).